A 1226-amino-acid polypeptide reads, in one-letter code: Cytosolic carboxypeptidase 1 (1226 aa).

The segment at 599 to 619 (TEDDEDTESNSSVEQASVEVP) is disordered. The 291-residue stretch at 848–1138 (YPYTYSTLQM…KFCVGLLRLK (291 aa)) folds into the Peptidase M14 domain. His920, Glu923, and His1017 together coordinate Zn(2+). Residue Glu1102 is the Proton donor/acceptor of the active site. At Ser1168 the chain carries Phosphoserine. The tract at residues 1206–1226 (YEPSAQEEVLSDSELSRTYLP) is disordered.

The protein belongs to the peptidase M14 family. As to quaternary structure, interacts with MYLK. The cofactor is Zn(2+).

It localises to the cytoplasm. The protein resides in the cytosol. Its subcellular location is the nucleus. The protein localises to the mitochondrion. The catalysed reaction is (L-glutamyl)(n+1)-gamma-L-glutamyl-L-glutamyl-[protein] + H2O = (L-glutamyl)(n)-gamma-L-glutamyl-L-glutamyl-[protein] + L-glutamate. It carries out the reaction C-terminal L-alpha-aminoacyl-L-glutamyl-L-glutamyl-[tubulin] + H2O = C-terminal L-alpha-aminoacyl-L-glutamyl-[tubulin] + L-glutamate. Metallocarboxypeptidase that mediates protein deglutamylation of tubulin and non-tubulin target proteins. Catalyzes the removal of polyglutamate side chains present on the gamma-carboxyl group of glutamate residues within the C-terminal tail of alpha- and beta-tubulin. Specifically cleaves tubulin long-side-chains, while it is not able to remove the branching point glutamate. Also catalyzes the removal of polyglutamate residues from the carboxy-terminus of alpha-tubulin as well as non-tubulin proteins such as MYLK. Involved in KLF4 deglutamylation which promotes KLF4 proteasome-mediated degradation, thereby negatively regulating cell pluripotency maintenance and embryogenesis. This chain is Cytosolic carboxypeptidase 1, found in Homo sapiens (Human).